An 844-amino-acid polypeptide reads, in one-letter code: RPA-related protein RADX (844 aa).

The segment at residues 228-331 (WHNRKNFPAL…LISTMEICLN (104 aa)) is a DNA-binding region (OB). 2 disordered regions span residues 571–609 (PASE…RPMD) and 626–664 (GPTA…TGKS). Residues 572-587 (ASETLQNASPPSTSQA) are compositionally biased toward polar residues. Basic and acidic residues predominate over residues 590–608 (KEGHYHERGSKRSQDDRPM). Positions 652–662 (SRENSTANATG) are enriched in polar residues.

The protein localises to the chromosome. In terms of biological role, single-stranded DNA-binding protein recruited to replication forks to maintain genome stability. Prevents fork collapse by antagonizing the accumulation of RAD51 at forks to ensure the proper balance of fork remodeling and protection without interfering with the capacity of cells to complete homologous recombination of double-strand breaks. The protein is RPA-related protein RADX of Rattus norvegicus (Rat).